Reading from the N-terminus, the 263-residue chain is Acyl-[acyl-carrier-protein]--UDP-N-acetylglucosamine O-acyltransferase (263 aa).

The protein belongs to the transferase hexapeptide repeat family. LpxA subfamily. As to quaternary structure, homotrimer.

It localises to the cytoplasm. It carries out the reaction a (3R)-hydroxyacyl-[ACP] + UDP-N-acetyl-alpha-D-glucosamine = a UDP-3-O-[(3R)-3-hydroxyacyl]-N-acetyl-alpha-D-glucosamine + holo-[ACP]. Its pathway is glycolipid biosynthesis; lipid IV(A) biosynthesis; lipid IV(A) from (3R)-3-hydroxytetradecanoyl-[acyl-carrier-protein] and UDP-N-acetyl-alpha-D-glucosamine: step 1/6. In terms of biological role, involved in the biosynthesis of lipid A, a phosphorylated glycolipid that anchors the lipopolysaccharide to the outer membrane of the cell. This is Acyl-[acyl-carrier-protein]--UDP-N-acetylglucosamine O-acyltransferase from Stenotrophomonas maltophilia (strain K279a).